The sequence spans 307 residues: 4-hydroxybenzoate octaprenyltransferase (307 aa).

Transmembrane regions (helical) follow at residues P19–G39, V48–M68, A105–I125, V127–Y147, L150–I170, G172–Y192, V221–H241, F243–F263, and F282–W302.

This sequence belongs to the UbiA prenyltransferase family. Mg(2+) serves as cofactor.

It localises to the cell inner membrane. The catalysed reaction is all-trans-octaprenyl diphosphate + 4-hydroxybenzoate = 4-hydroxy-3-(all-trans-octaprenyl)benzoate + diphosphate. The protein operates within cofactor biosynthesis; ubiquinone biosynthesis. Functionally, catalyzes the prenylation of para-hydroxybenzoate (PHB) with an all-trans polyprenyl group. Mediates the second step in the final reaction sequence of ubiquinone-8 (UQ-8) biosynthesis, which is the condensation of the polyisoprenoid side chain with PHB, generating the first membrane-bound Q intermediate 3-octaprenyl-4-hydroxybenzoate. This Psychrobacter arcticus (strain DSM 17307 / VKM B-2377 / 273-4) protein is 4-hydroxybenzoate octaprenyltransferase.